A 735-amino-acid chain; its full sequence is Protein STRUBBELIG-RECEPTOR FAMILY 2 (735 aa).

The N-terminal stretch at 1 to 23 (MKTKQQLRFLATILLTTILFVLA) is a signal peptide. At 24-297 (KTDTDPLEVL…KKKKKGIGAG (274 aa)) the chain is on the extracellular side. LRR repeat units lie at residues 78 to 94 (LRELKLLGSLGNQLQHL), 96 to 119 (NLKILDVSFNNLEGEIPFGLPPNA), 120 to 140 (THINMAYNNLTQSIPFSLPLM), 142 to 163 (SLQSLNLSHNSLSGPLGNVFSG), 165 to 187 (QIKEMDLSFNNLTGDLPSSFGTL), 189 to 211 (NLTSLYLQNNRLTGSVIYLADLP), 212 to 232 (LADLNIEDNQFSGIIPSHFQS), and 233 to 253 (IPHLWIWGNKFHVEPNYKPWK). N-linked (GlcNAc...) asparagine glycans are attached at residues asparagine 118, asparagine 128, asparagine 147, asparagine 175, and asparagine 189. The N-linked (GlcNAc...) asparagine glycan is linked to asparagine 264. Residues 298–318 (STFLLVGGLALLGTFFALFAV) form a helical membrane-spanning segment. Over 319 to 735 (RMNHRRAQNL…SSPTFSYLSS (417 aa)) the chain is Cytoplasmic. Residues 358-378 (PQIKRFQPPPAPQLRHLPSPP) form a disordered region. The region spanning 415–695 (FSEENLLGEG…EIVEALTALI (281 aa)) is the Protein kinase domain.

This sequence belongs to the protein kinase superfamily. Ser/Thr protein kinase family. Expressed in seedlings, roots, stems, leaves, flowers and siliques.

Its subcellular location is the membrane. In Arabidopsis thaliana (Mouse-ear cress), this protein is Protein STRUBBELIG-RECEPTOR FAMILY 2 (SRF2).